A 746-amino-acid chain; its full sequence is MITQNSIPEVKEDFIGYALHERRIRLPQFQDLGPADLVTLTKYLPTSSNTNAINSTSRNGAAIIQSPAAVVADDSAASMATNGDASDTAVTTNYTNASIYSSSRNANDGAPMVAELHPLDKLKDEVGTFFYSMGVDTSGPTSIAIFLKEISEVISEKPQVWFGRKKTFNVARISFSTWNAFRRCDINVVVHIPGSIQNFIVDCNGESQNIEMCADYDLIWAETFVSGVVRSIMLMKENAEEGELQNLVETLILNPFTAGQIDDVPEMFIDLFPIVYHKGPLLGAPYYITNVTNTNNYLVETLVEIVKLTRNVSRAEIMLKNLATDNPEAIIILIKIFLVCDQELDAIKLTYDMLSQDKIINNTNNRMDYKSELLCLQAQFLIDKRQDYSLAQNIAQEAVNCSPSEFRPWYLLSKVYVKLNDIENALLILNSCPMSPLKEKYVLKRVAPLPSNNSLHLPLPIDVVLDEVTSLNPQDVQNEHRSADPMLVNLAASNLKSTFQLAYRLLTEIVQITGWENLLKYRSNIFVMEEEYQKSSSSLPKDVNKQEEQPLRAKRLCERWLDNLFMLLYEDLKMYTLWQTEQLYMDAQNNNHNKLTFEWELFGLCARRLGHFPEAAKAFQNGLSQRFSSRCARKLLEYCINERQRVKNFINSPNSHDMVPEIVSSRIRELDNSIIDLCVKICCWNHRWYTEFSISLLDCLSVVIQDMSLTKVSNEISSRYPETVLNLVQENLLNFFTTCTIGCYDA.

The segment at 733–746 (LNFFTTCTIGCYDA) is CHS5-binding.

The protein belongs to the CHAPS family. Component of the CHS5/6 complex composed of the 4 CHAPS proteins BCH1, BCH2v, BUD7, and CHS6 as well as at least CHS5 and GTP-bound ARF1. The complex interacts with the cargo protein CHS3.

The protein localises to the golgi apparatus. It is found in the trans-Golgi network membrane. Functionally, member of the CHS5-ARF1P-binding proteins (CHAPS) which mediates export of specific cargo proteins, including chitin synthase CHS3. May be involved in positioning the proximal bud pole signal. The sequence is that of Bud site selection protein 7 (BUD7) from Saccharomyces cerevisiae (strain ATCC 204508 / S288c) (Baker's yeast).